Reading from the N-terminus, the 296-residue chain is Glycine--tRNA ligase alpha subunit (296 aa).

It belongs to the class-II aminoacyl-tRNA synthetase family. Tetramer of two alpha and two beta subunits.

The protein localises to the cytoplasm. It catalyses the reaction tRNA(Gly) + glycine + ATP = glycyl-tRNA(Gly) + AMP + diphosphate. The polypeptide is Glycine--tRNA ligase alpha subunit (Listeria innocua serovar 6a (strain ATCC BAA-680 / CLIP 11262)).